The following is a 235-amino-acid chain: Enolase-phosphatase E1 (235 aa).

The protein belongs to the HAD-like hydrolase superfamily. MasA/MtnC family. Monomer. Requires Mg(2+) as cofactor.

The enzyme catalyses 5-methylsulfanyl-2,3-dioxopentyl phosphate + H2O = 1,2-dihydroxy-5-(methylsulfanyl)pent-1-en-3-one + phosphate. It participates in amino-acid biosynthesis; L-methionine biosynthesis via salvage pathway; L-methionine from S-methyl-5-thio-alpha-D-ribose 1-phosphate: step 3/6. Its pathway is amino-acid biosynthesis; L-methionine biosynthesis via salvage pathway; L-methionine from S-methyl-5-thio-alpha-D-ribose 1-phosphate: step 4/6. Bifunctional enzyme that catalyzes the enolization of 2,3-diketo-5-methylthiopentyl-1-phosphate (DK-MTP-1-P) into the intermediate 2-hydroxy-3-keto-5-methylthiopentenyl-1-phosphate (HK-MTPenyl-1-P), which is then dephosphorylated to form the acireductone 1,2-dihydroxy-3-keto-5-methylthiopentene (DHK-MTPene). The polypeptide is Enolase-phosphatase E1 (Gluconacetobacter diazotrophicus (strain ATCC 49037 / DSM 5601 / CCUG 37298 / CIP 103539 / LMG 7603 / PAl5)).